The following is a 196-amino-acid chain: Proteasome subunit beta (196 aa).

A propeptide (removed in mature form; by autocatalysis) is located at residue M1. T2 (nucleophile) is an active-site residue.

The protein belongs to the peptidase T1B family. In terms of assembly, the 20S proteasome core is composed of 14 alpha and 14 beta subunits that assemble into four stacked heptameric rings, resulting in a barrel-shaped structure. The two inner rings, each composed of seven catalytic beta subunits, are sandwiched by two outer rings, each composed of seven alpha subunits. The catalytic chamber with the active sites is on the inside of the barrel. Has a gated structure, the ends of the cylinder being occluded by the N-termini of the alpha-subunits. Is capped at one or both ends by the proteasome regulatory ATPase, PAN.

Its subcellular location is the cytoplasm. The enzyme catalyses Cleavage of peptide bonds with very broad specificity.. With respect to regulation, the formation of the proteasomal ATPase PAN-20S proteasome complex, via the docking of the C-termini of PAN into the intersubunit pockets in the alpha-rings, triggers opening of the gate for substrate entry. Interconversion between the open-gate and close-gate conformations leads to a dynamic regulation of the 20S proteasome proteolysis activity. Component of the proteasome core, a large protease complex with broad specificity involved in protein degradation. This Nanoarchaeum equitans (strain Kin4-M) protein is Proteasome subunit beta.